The sequence spans 471 residues: Putative multidrug resistance protein MdtD (471 aa).

Over 1-11 (MTDLPDSTRWQ) the chain is Periplasmic. The chain crosses the membrane as a helical span at residues 12–32 (LWIVAFGFFMQSLDTTIVNTA). Over 33–48 (LPSMAQSLGESPLHMH) the chain is Cytoplasmic. The chain crosses the membrane as a helical span at residues 49-69 (MVIVSYVLTVAVMLPASGWLA). Topologically, residues 70-76 (DKVGVRN) are periplasmic. A helical membrane pass occupies residues 77–97 (IFFTAIVLFTLGSLFCALSGT). Over 98-101 (LNEL) the chain is Cytoplasmic. The helical transmembrane segment at 102–124 (LLARALQGVGGAMMVPVGRLTVM) threads the bilayer. Topologically, residues 125 to 137 (KIVPREQYMAAMT) are periplasmic. The helical transmembrane segment at 138-158 (FVTLPGQVGPLLGPALGGLLV) threads the bilayer. The Cytoplasmic segment spans residues 159 to 164 (EYASWH). A helical transmembrane segment spans residues 165–185 (WIFLINIPVGIIGAIATLMLM). Residues 186 to 196 (PNYTMQTRRFD) are Periplasmic-facing. Residues 197 to 217 (LSGFLLLAVGMAVLTLALDGS) form a helical membrane-spanning segment. Topologically, residues 218–224 (KGTGLSP) are cytoplasmic. A helical transmembrane segment spans residues 225–245 (LAIAGLVAVGVVALVLYLLHA). The Periplasmic portion of the chain corresponds to 246–262 (RNNNRALFSLKLFRTRT). The helical transmembrane segment at 263–283 (FSLGLAGSFAGRIGSGMLPFM) threads the bilayer. Residues 284–285 (TP) are Cytoplasmic-facing. A helical membrane pass occupies residues 286–306 (VFLQIGLGFSPFHAGLMMIPM). Over 307–341 (VLGSMGMKRIVVQVVNRFGYRRVLVATTLGLSLVT) the chain is Periplasmic. A helical transmembrane segment spans residues 342–362 (LLFMTTALLGWYYVLPFVLFL). Over 363–395 (QGMVNSTRFSSMNTLTLKDLPDNLASSGNSLLS) the chain is Cytoplasmic. The helical transmembrane segment at 396–416 (MIMQLSMSIGVTIAGLLLGLF) threads the bilayer. Topologically, residues 417–430 (GSQHISVDSGTTQT) are periplasmic. Residues 431-451 (VFMYTWLSMAFIIALPAFIFA) traverse the membrane as a helical segment. Over 452–471 (RVPNDTHQNVAISRRKRSAQ) the chain is Cytoplasmic.

This sequence belongs to the major facilitator superfamily. TCR/Tet family.

The protein localises to the cell inner membrane. The chain is Putative multidrug resistance protein MdtD from Shigella flexneri.